The primary structure comprises 809 residues: MEKQNEEISTDDAETSQSQLVDDSKVETLDDCVSKVETLDDCVSKVETLDDCVSKAETLADCVSKVETLDDCVSKVKTLDDCVSKVENLDDCVPKVETLDDCVPKVETLDDCVSEVETLDDCVSKAQGLKEEGNKLFQKRDYDGAMFKYGEAIKILPKDHVEVSHVRANVASCYMQLEPGEFAKAIHECDLALSVTPDHNKALLKRARCYEALNKLDLALRDVCMVSKLDPKNPMASEIVEKLKRTLESKGLRINNSVIELPPDYVEPVGASPAALWAKLGKVRVKKTKKSNQVEEKSEGEGEDVEPEKKNNVLAEKGKEKIKMKVKGKQSDKRSDTSKEQEKVIIEEELLVIGVEDVNKDVKFVYSDDIRLAELPINCTLFKLREVVHERFPSLRAVHIKYRDQEGDLVTITTDEELRMSEVSSRSQGTMRFYVVEVSPEQDPFFGRLVEMKKLKITADSFKAKVNGRGGCKVEDWMIEFAHLFKIQARIDSDRCLNLQELGMKLNSEAMEEVVTSDAAQGPFDRAAQQFQEVAARSLLNLGYVHMSGARKRLSLLQGVSGESVSEQVKTAYECAKKEHANAKEKYEEAMKIKPECFEVFLALGLQQFEEARLSWYYVLVSHLDLKTWPYADVVQFYQSAESNIKKSMEVLENLETGKESEPSQAGKTDCLTHEKDLGSSTQNNPAKEAGRLKSWIDILLCAVLYERSIMEYKLDQPFWRESLEAAMEKFELAGTCKDDVVEIISEDYVAGNTLRDIRFHMEEIIQIFDEIYEAKHWTNGIPSDQLEEILKRRAENIFHVPNIAIQRG.

The interval 1 to 22 is disordered; the sequence is MEKQNEEISTDDAETSQSQLVD. TPR repeat units follow at residues 126–159, 164–199, 200–233, 235–265, and 274–311; these read AQGL…LPKD, SHVR…TPDH, NKAL…DPKN, MASE…PPDY, and AALW…EKKN. Residues 288 to 339 form a disordered region; the sequence is TKKSNQVEEKSEGEGEDVEPEKKNNVLAEKGKEKIKMKVKGKQSDKRSDTSK. Ser-298 carries the post-translational modification Phosphoserine. Residues 307-339 are compositionally biased toward basic and acidic residues; sequence PEKKNNVLAEKGKEKIKMKVKGKQSDKRSDTSK. The 80-residue stretch at 359-438 folds into the PB1 domain; sequence NKDVKFVYSD…GTMRFYVVEV (80 aa). 3 TPR repeats span residues 508 to 541, 563 to 597, and 615 to 648; these read SEAM…SLLN, ESVS…KPEC, and SWYY…IKKS. Residues 656-686 form a disordered region; sequence ETGKESEPSQAGKTDCLTHEKDLGSSTQNNP. The TPR 9 repeat unit spans residues 709–741; that stretch reads SIMEYKLDQPFWRESLEAAMEKFELAGTCKDDV.

In terms of biological role, carboxylate clamp type tetratricopeptide repeat protein that may act as a potential Hsp90/Hsp70 co-chaperone. Contributes to polar growth of root hairs. The polypeptide is Protein PHOX3 (Arabidopsis thaliana (Mouse-ear cress)).